A 189-amino-acid chain; its full sequence is Putative manganese efflux pump MntP (189 aa).

The next 6 membrane-spanning stretches (helical) occupy residues 2-22 (SLTELILLAIGLSMDASAVSI), 36-56 (ILQMAVMFAVFQGIMPLIGYY), 71-91 (WIAFILLVIIGGKMIHESITA), 106-126 (LLLVQAVATSIDALAVGVSLS), 132-152 (ILYSITIIGIVTFICCTAAIL), and 167-187 (IVGGLILVGIGVKIFVQHMFF).

The protein belongs to the MntP (TC 9.B.29) family.

It is found in the cell membrane. Probably functions as a manganese efflux pump. This is Putative manganese efflux pump MntP from Ruminiclostridium cellulolyticum (strain ATCC 35319 / DSM 5812 / JCM 6584 / H10) (Clostridium cellulolyticum).